The chain runs to 819 residues: MASTSTAGDRIKKFLGIPADERLNDTACYVDGSFVESEPTTQDFLNEIRPTVQGTLNYLRELFPFVNWIFHYNLTWLLGDFIAGVTVGFVVVPQGMAYAKLANLAPEYGLYTSFVGFVLYWAFATSKDITIGAVAVMSTIVGNIIANVQKDHPDFDAGDIARTLAFISGAMLLFLGLIRFGFIVEFIPIVAISAFMTGSAISIAAGQVSTLMGIPNINSREETYKVIINTLKGLPNTHLDAAMGLTALFGLYFIRWFCTQMGKRYPRQQRAWFFVSTLRMVFIIILYILVSWLVNRHVKDPKKAHFKILGHVPSGFQHKGAPRLDNEILSAISGDIPTTILVLLIEHIAISKSFGRVNNYIINPSQELVAIGFTNLLGPFLGGYPATGSFSRTAIKAKAGVRTPLAGIFTAVLVLLALYALTSVFFYIPNSALAAMIIHAVGDLITPPREVYKFWLTSPLEVVIFFAGVFVSIFTSIENGIYVTVAASGAVLLWRIAKSPGKFLGQTEIYTAPRELVRGSKDSGLTQSLLQKSEHHTAFLSLDRDDLSNPELQISTPWPGIFVYRFGEGLNYVNSAKHLDNLTIHVFKHTRRTELNKFEKLGDRPWNDPGPRRGQAFLTDELVSRPTLRAIILDFSAVNCIDVTAAQALQDLRNQFDRYAHPDKVEWHFAGVSNRWTKRALVASGFGVDSLRTAKVQRENHKGGVQEVDQGPLVAIGPSVSASDIEAVPVGTSGSGSTDEKRPEGEGGATNGGMEKGSANGEDISTVPTATSADACALARDAGGKRLVPVFGINRPFFHIDVATALKSAVRNTGVVAAE.

Asparagine 24 carries N-linked (GlcNAc...) asparagine glycosylation. 10 helical membrane passes run 72 to 92 (YNLT…FVVV), 104 to 124 (LAPE…WAFA), 129 to 149 (ITIG…ANVQ), 172 to 192 (LLFL…IVAI), 194 to 214 (AFMT…LMGI), 273 to 293 (FFVS…VSWL), 328 to 348 (ILSA…IEHI), 365 to 385 (SQEL…GGYP), 454 to 474 (FWLT…VSIF), and 477 to 497 (IENG…WRIA). Residues 551 to 708 (ELQISTPWPG…ENHKGGVQEV (158 aa)) form the STAS domain. Asparagine 581 carries an N-linked (GlcNAc...) asparagine glycan. Residues 726 to 766 (EAVPVGTSGSGSTDEKRPEGEGGATNGGMEKGSANGEDIST) are disordered. The segment covering 746–755 (EGGATNGGME) has biased composition (gly residues).

Belongs to the SLC26A/SulP transporter (TC 2.A.53) family. In terms of tissue distribution, mainly found in mycelia.

Its subcellular location is the membrane. Functionally, uptake of sulfate into the cell. The polypeptide is Sulfate permease 2 (cys-14) (Neurospora crassa (strain ATCC 24698 / 74-OR23-1A / CBS 708.71 / DSM 1257 / FGSC 987)).